We begin with the raw amino-acid sequence, 164 residues long: UPF0262 protein Saro_0143 (164 aa).

This sequence belongs to the UPF0262 family.

This chain is UPF0262 protein Saro_0143, found in Novosphingobium aromaticivorans (strain ATCC 700278 / DSM 12444 / CCUG 56034 / CIP 105152 / NBRC 16084 / F199).